A 260-amino-acid chain; its full sequence is Carbonic anhydrase 3 (260 aa).

The residue at position 2 (A2) is an N-acetylalanine. One can recognise an Alpha-carbonic anhydrase domain in the interval 3–259; it reads KEWGYADHNG…LKGRVVRASF (257 aa). Residues S29, S43, S50, and S55 each carry the phosphoserine modification. An involved in proton transfer region spans residues 64–67; that stretch reads RTCR. The residue at position 73 (T73) is a Phosphothreonine. Zn(2+) contacts are provided by H94, H96, and H119. Y127 carries the phosphotyrosine modification. Phosphothreonine occurs at positions 129 and 176. An S-glutathionyl cysteine mark is found at C182 and C187. Substrate is bound at residue 198 to 199; it reads TT. Position 216 is a phosphothreonine (T216). S219 is modified (phosphoserine).

The protein belongs to the alpha-carbonic anhydrase family. The cofactor is Zn(2+). In terms of processing, S-thiolated both by thiol-disulfide exchange with glutathione disulfide and by oxyradical-initiated S-thiolation with reduced glutathione. S-glutathionylated in hepatocytes under oxidative stress.

It is found in the cytoplasm. It carries out the reaction hydrogencarbonate + H(+) = CO2 + H2O. Its activity is regulated as follows. Inhibited by acetazolamide. Its function is as follows. Reversible hydration of carbon dioxide. The chain is Carbonic anhydrase 3 (CA3) from Equus caballus (Horse).